We begin with the raw amino-acid sequence, 184 residues long: ATP-dependent protease subunit HslV (184 aa).

Thr-12 is an active-site residue. Na(+)-binding residues include Ala-166, Cys-169, and Thr-172.

The protein belongs to the peptidase T1B family. HslV subfamily. As to quaternary structure, a double ring-shaped homohexamer of HslV is capped on each side by a ring-shaped HslU homohexamer. The assembly of the HslU/HslV complex is dependent on binding of ATP.

The protein resides in the cytoplasm. The enzyme catalyses ATP-dependent cleavage of peptide bonds with broad specificity.. Its activity is regulated as follows. Allosterically activated by HslU binding. Its function is as follows. Protease subunit of a proteasome-like degradation complex believed to be a general protein degrading machinery. The chain is ATP-dependent protease subunit HslV from Brucella canis (strain ATCC 23365 / NCTC 10854 / RM-666).